A 312-amino-acid chain; its full sequence is Putative S-adenosyl-L-methionine-dependent methyltransferase Mjls_0078 (312 aa).

S-adenosyl-L-methionine contacts are provided by residues D134 and 163-164; that span reads DL.

It belongs to the UPF0677 family.

Functionally, exhibits S-adenosyl-L-methionine-dependent methyltransferase activity. The polypeptide is Putative S-adenosyl-L-methionine-dependent methyltransferase Mjls_0078 (Mycobacterium sp. (strain JLS)).